The sequence spans 241 residues: Ubiquinone biosynthesis O-methyltransferase (241 aa).

4 residues coordinate S-adenosyl-L-methionine: arginine 46, glycine 66, aspartate 87, and methionine 131.

It belongs to the methyltransferase superfamily. UbiG/COQ3 family.

It catalyses the reaction a 3-demethylubiquinol + S-adenosyl-L-methionine = a ubiquinol + S-adenosyl-L-homocysteine + H(+). It carries out the reaction a 3-(all-trans-polyprenyl)benzene-1,2-diol + S-adenosyl-L-methionine = a 2-methoxy-6-(all-trans-polyprenyl)phenol + S-adenosyl-L-homocysteine + H(+). It participates in cofactor biosynthesis; ubiquinone biosynthesis. In terms of biological role, O-methyltransferase that catalyzes the 2 O-methylation steps in the ubiquinone biosynthetic pathway. The protein is Ubiquinone biosynthesis O-methyltransferase of Bordetella pertussis (strain Tohama I / ATCC BAA-589 / NCTC 13251).